We begin with the raw amino-acid sequence, 148 residues long: Large ribosomal subunit protein uL13 (148 aa).

Belongs to the universal ribosomal protein uL13 family. Part of the 50S ribosomal subunit.

This protein is one of the early assembly proteins of the 50S ribosomal subunit, although it is not seen to bind rRNA by itself. It is important during the early stages of 50S assembly. In Lacticaseibacillus casei (strain BL23) (Lactobacillus casei), this protein is Large ribosomal subunit protein uL13.